The following is a 400-amino-acid chain: Nicotinate phosphoribosyltransferase (400 aa).

At His-220 the chain carries Phosphohistidine; by autocatalysis.

This sequence belongs to the NAPRTase family. Transiently phosphorylated on a His residue during the reaction cycle. Phosphorylation strongly increases the affinity for substrates and increases the rate of nicotinate D-ribonucleotide production. Dephosphorylation regenerates the low-affinity form of the enzyme, leading to product release.

It catalyses the reaction nicotinate + 5-phospho-alpha-D-ribose 1-diphosphate + ATP + H2O = nicotinate beta-D-ribonucleotide + ADP + phosphate + diphosphate. The protein operates within cofactor biosynthesis; NAD(+) biosynthesis; nicotinate D-ribonucleotide from nicotinate: step 1/1. Its function is as follows. Catalyzes the synthesis of beta-nicotinate D-ribonucleotide from nicotinate and 5-phospho-D-ribose 1-phosphate at the expense of ATP. The polypeptide is Nicotinate phosphoribosyltransferase (Salmonella choleraesuis (strain SC-B67)).